A 244-amino-acid chain; its full sequence is EEF1A lysine methyltransferase 2 (244 aa).

The segment at 1–27 (MNADAEGHSGAVVPAQSPEGSSAADDF) is disordered. Residue serine 21 is modified to Phosphoserine.

It belongs to the class I-like SAM-binding methyltransferase superfamily. EFM4 family.

The protein localises to the cytoplasm. It is found in the nucleus. It carries out the reaction L-lysyl-[protein] + 3 S-adenosyl-L-methionine = N(6),N(6),N(6)-trimethyl-L-lysyl-[protein] + 3 S-adenosyl-L-homocysteine + 3 H(+). Its function is as follows. Protein-lysine methyltransferase that selectively catalyzes the trimethylation of EEF1A at 'Lys-318'. The polypeptide is EEF1A lysine methyltransferase 2 (Mus musculus (Mouse)).